Reading from the N-terminus, the 311-residue chain is m7GpppX diphosphatase (311 aa).

Substrate is bound by residues glutamate 159, lysine 181, and 242–253 (HYQPSFYHLHVH). The short motif at 249 to 253 (HLHVH) is the Histidine triad motif element. Histidine 251 acts as the Nucleophile in catalysis.

It belongs to the HIT family. In terms of tissue distribution, expressed in neurons in the ventral cord, the nerve ring and the pharynx.

Its subcellular location is the nucleus. It carries out the reaction a 5'-end (N(7)-methyl 5'-triphosphoguanosine)-ribonucleoside in mRNA + H2O = N(7)-methyl-GMP + a 5'-end diphospho-ribonucleoside in mRNA + 2 H(+). The catalysed reaction is a 5'-end (N(2),N(2),N(7)-trimethyl 5'-triphosphoguanosine)-ribonucleoside in mRNA + H2O = (N(2),N(2),N(7))-trimethyl-GMP + a 5'-end diphospho-ribonucleoside in mRNA + 2 H(+). With respect to regulation, the hydrolytic product 7-methylguanosine diphosphate (m7GDP) efficiently inhibits the decapping scavenger activity and acts as a competitive inhibitor in vitro. Functionally, decapping scavenger enzyme that catalyzes the cleavage of a residual cap structure following the degradation of mRNAs of the 3'-&gt;5' exosome-mediated mRNA decay pathway. Hydrolyzes cap analog structures like 7-methylguanosine nucleoside triphosphate (m7GpppG) and tri-methyl guanosine nucleoside triphosphate (m3(2,2,7)GpppG) with up to 2 nucleotide substrates (small capped oligoribonucleotides) and specifically releases 5'-phosphorylated RNA fragments and 7-methylguanosine monophosphate (m7GMP). Does not hydrolyze unmethylated cap analog (GpppG) and shows no decapping activity on intact m7GpppG-capped mRNA molecules. Does not hydrolyze 7-methylguanosine diphosphate (m7GDP) and tri-methylguanosine diphosphate (m3(2,2,7)GDP) to m(7)GMP and m3(2,2,7)GMP, respectively. May also play a role in the 5'-&gt;3 mRNA decay pathway; m7GDP, the downstream product released by the 5'-&gt;3' mRNA mediated decapping activity, may be also converted by dcs-1 to m7GMP. Binds to m7GpppG and strongly to m7GDP. In Caenorhabditis elegans, this protein is m7GpppX diphosphatase (dcs-1).